The chain runs to 507 residues: ATP synthase subunit alpha (507 aa).

169 to 176 (GDRQIGKT) is a binding site for ATP.

The protein belongs to the ATPase alpha/beta chains family. As to quaternary structure, F-type ATPases have 2 components, CF(1) - the catalytic core - and CF(0) - the membrane proton channel. CF(1) has five subunits: alpha(3), beta(3), gamma(1), delta(1), epsilon(1). CF(0) has three main subunits: a(1), b(2) and c(9-12). The alpha and beta chains form an alternating ring which encloses part of the gamma chain. CF(1) is attached to CF(0) by a central stalk formed by the gamma and epsilon chains, while a peripheral stalk is formed by the delta and b chains.

Its subcellular location is the cell inner membrane. It catalyses the reaction ATP + H2O + 4 H(+)(in) = ADP + phosphate + 5 H(+)(out). Functionally, produces ATP from ADP in the presence of a proton gradient across the membrane. The alpha chain is a regulatory subunit. The polypeptide is ATP synthase subunit alpha (Desulfotalea psychrophila (strain LSv54 / DSM 12343)).